Reading from the N-terminus, the 179-residue chain is Peptide deformylase (179 aa).

C102 and H144 together coordinate Fe cation. Residue E145 is part of the active site. H148 contributes to the Fe cation binding site.

Belongs to the polypeptide deformylase family. The cofactor is Fe(2+).

It carries out the reaction N-terminal N-formyl-L-methionyl-[peptide] + H2O = N-terminal L-methionyl-[peptide] + formate. In terms of biological role, removes the formyl group from the N-terminal Met of newly synthesized proteins. Requires at least a dipeptide for an efficient rate of reaction. N-terminal L-methionine is a prerequisite for activity but the enzyme has broad specificity at other positions. This Wolbachia pipientis wMel protein is Peptide deformylase.